A 131-amino-acid polypeptide reads, in one-letter code: Snaclec macrovipecetin subunit alpha (131 aa).

Disulfide bonds link cysteine 2/cysteine 13, cysteine 30/cysteine 125, and cysteine 100/cysteine 117. In terms of domain architecture, C-type lectin spans 9-126 (HEEHCYKVFR…CEDKNPFICK (118 aa)).

Heterodimer of subunits alpha and beta; disulfide-linked. Expressed by the venom gland.

It is found in the secreted. Its function is as follows. Interferes with one step of hemostasis (modulation of platelet aggregation, or coagulation cascade, for example). The protein is Snaclec macrovipecetin subunit alpha of Macrovipera lebetinus (Levantine viper).